Here is a 357-residue protein sequence, read N- to C-terminus: 3-isopropylmalate dehydrogenase (357 aa).

An NAD(+)-binding site is contributed by 75 to 88 (GPKWDTLPPAERPE). Arginine 96, arginine 106, arginine 134, and aspartate 222 together coordinate substrate. Residues aspartate 222, aspartate 246, and aspartate 250 each contribute to the Mg(2+) site. An NAD(+)-binding site is contributed by 279–291 (GSAPDIAGQQKAN).

It belongs to the isocitrate and isopropylmalate dehydrogenases family. LeuB type 1 subfamily. As to quaternary structure, homodimer. Mg(2+) is required as a cofactor. It depends on Mn(2+) as a cofactor.

It is found in the cytoplasm. It carries out the reaction (2R,3S)-3-isopropylmalate + NAD(+) = 4-methyl-2-oxopentanoate + CO2 + NADH. The protein operates within amino-acid biosynthesis; L-leucine biosynthesis; L-leucine from 3-methyl-2-oxobutanoate: step 3/4. Functionally, catalyzes the oxidation of 3-carboxy-2-hydroxy-4-methylpentanoate (3-isopropylmalate) to 3-carboxy-4-methyl-2-oxopentanoate. The product decarboxylates to 4-methyl-2 oxopentanoate. This chain is 3-isopropylmalate dehydrogenase, found in Moorella thermoacetica (strain ATCC 39073 / JCM 9320).